A 399-amino-acid chain; its full sequence is Tyrosine--tRNA ligase (399 aa).

The 'HIGH' region motif lies at Pro-42–His-51. The 'KMSKS' region signature appears at Lys-226 to Ser-230. Lys-229 is a binding site for ATP. The S4 RNA-binding domain maps to Leu-337 to Val-398.

The protein belongs to the class-I aminoacyl-tRNA synthetase family. TyrS type 2 subfamily. Homodimer.

The protein resides in the cytoplasm. The catalysed reaction is tRNA(Tyr) + L-tyrosine + ATP = L-tyrosyl-tRNA(Tyr) + AMP + diphosphate + H(+). Its function is as follows. Catalyzes the attachment of tyrosine to tRNA(Tyr) in a two-step reaction: tyrosine is first activated by ATP to form Tyr-AMP and then transferred to the acceptor end of tRNA(Tyr). The polypeptide is Tyrosine--tRNA ligase (Coxiella burnetii (strain RSA 493 / Nine Mile phase I)).